Reading from the N-terminus, the 110-residue chain is MIKSELVARLAQANPHLYQRDVERIVSTIFDEISAALARGDRVELRGFGAFSVKSRPARTGRNPRTGEPVHVDEKSVPFFKTGKELRERLNNADIADDKLMVDDSDDGDD.

Belongs to the bacterial histone-like protein family. As to quaternary structure, heterodimer of an alpha and a beta chain.

This protein is one of the two subunits of integration host factor, a specific DNA-binding protein that functions in genetic recombination as well as in transcriptional and translational control. The polypeptide is Integration host factor subunit beta (Parvibaculum lavamentivorans (strain DS-1 / DSM 13023 / NCIMB 13966)).